A 64-amino-acid polypeptide reads, in one-letter code: Cytochrome c oxidase subunit 5C-2 (64 aa).

A helical transmembrane segment spans residues 15–34 (SVVKELIIGLTLGLAAGGLW).

This sequence belongs to the cytochrome c oxidase subunit 5C family.

It is found in the mitochondrion inner membrane. This protein is one of the nuclear-coded polypeptide chains of cytochrome c oxidase, the terminal oxidase in mitochondrial electron transport. The protein is Cytochrome c oxidase subunit 5C-2 of Arabidopsis thaliana (Mouse-ear cress).